We begin with the raw amino-acid sequence, 84 residues long: Sporulation-specific transcription factor SpoVIF (84 aa).

It localises to the cytoplasm. Functionally, transcription factor involved in spore coat assembly and spore resistance. Required for gene regulation during the latter stages of sporulation. Regulates the transcription of at least cgeA, cotG and cotS. May directly or indirectly control the function of the GerE protein. This Bacillus subtilis (strain 168) protein is Sporulation-specific transcription factor SpoVIF.